The sequence spans 542 residues: Protein XP55 (542 aa).

Residues methionine 1–alanine 33 form the signal peptide. Cysteine 34 carries the N-palmitoyl cysteine lipid modification. Cysteine 34 carries the S-diacylglycerol cysteine lipid modification. Residues leucine 519–lysine 542 form a disordered region.

This sequence belongs to the bacterial solute-binding protein 5 family.

The protein resides in the cell membrane. Functionally, required for transport of an unidentified substrate. This Streptomyces lividans protein is Protein XP55 (xp55).